The sequence spans 338 residues: Aspartate carbamoyltransferase catalytic subunit (338 aa).

Residues Arg-59 and Thr-60 each coordinate carbamoyl phosphate. Lys-87 provides a ligand contact to L-aspartate. Carbamoyl phosphate is bound by residues Arg-109, His-142, and Gln-145. L-aspartate is bound by residues Arg-182 and Arg-253. Residues Gly-294 and Pro-295 each contribute to the carbamoyl phosphate site.

It belongs to the aspartate/ornithine carbamoyltransferase superfamily. ATCase family. Heterododecamer (2C3:3R2) of six catalytic PyrB chains organized as two trimers (C3), and six regulatory PyrI chains organized as three dimers (R2).

It catalyses the reaction carbamoyl phosphate + L-aspartate = N-carbamoyl-L-aspartate + phosphate + H(+). Its pathway is pyrimidine metabolism; UMP biosynthesis via de novo pathway; (S)-dihydroorotate from bicarbonate: step 2/3. Functionally, catalyzes the condensation of carbamoyl phosphate and aspartate to form carbamoyl aspartate and inorganic phosphate, the committed step in the de novo pyrimidine nucleotide biosynthesis pathway. The polypeptide is Aspartate carbamoyltransferase catalytic subunit (Prochlorococcus marinus (strain MIT 9301)).